A 330-amino-acid polypeptide reads, in one-letter code: tRNA U34 carboxymethyltransferase (330 aa).

Carboxy-S-adenosyl-L-methionine-binding positions include Lys-98, Trp-112, Lys-117, Gly-137, 187–188 (ME), Met-203, Tyr-207, and Arg-322. Residues 309-330 (NPSKTIEGYPGPKRATLIAEKP) are disordered.

It belongs to the class I-like SAM-binding methyltransferase superfamily. CmoB family. Homotetramer.

The enzyme catalyses carboxy-S-adenosyl-L-methionine + 5-hydroxyuridine(34) in tRNA = 5-carboxymethoxyuridine(34) in tRNA + S-adenosyl-L-homocysteine + H(+). In terms of biological role, catalyzes carboxymethyl transfer from carboxy-S-adenosyl-L-methionine (Cx-SAM) to 5-hydroxyuridine (ho5U) to form 5-carboxymethoxyuridine (cmo5U) at position 34 in tRNAs. The chain is tRNA U34 carboxymethyltransferase from Marinobacter nauticus (strain ATCC 700491 / DSM 11845 / VT8) (Marinobacter aquaeolei).